The primary structure comprises 280 residues: MSSYLDYPVCNRGTNIFSAKPGYHNLNHGYLSSNSCATSDSYAPDGRLAAPTSAPHQSPGLPLHHQTHLDLPFAATGNSVYGSHLDYGHHQYGLAPEQDRSYVHPQVSPLGTNMAPYTGDSCGPAAANGSQYLHFGNGEQRLQEYPDNVYARLPPQSKKESEHVEETCKTFDWMKVKRNPPKTGGASEFGVPGQHNVIRTNFTTKQLTELEKEFHFNKYLTRARRVEVAASLELNETQVKIWFQNRRMKQKKREKLGGVLVHREKASGPESSPKAKESEP.

A disordered region spans residues 46–65 (GRLAAPTSAPHQSPGLPLHH). An Antp-type hexapeptide motif is present at residues 170-175 (TFDWMK). The segment at residues 195 to 254 (HNVIRTNFTTKQLTELEKEFHFNKYLTRARRVEVAASLELNETQVKIWFQNRRMKQKKRE) is a DNA-binding region (homeobox). Positions 249 to 280 (KQKKREKLGGVLVHREKASGPESSPKAKESEP) are disordered. A compositionally biased stretch (basic and acidic residues) spans 261-280 (VHREKASGPESSPKAKESEP).

It belongs to the Antp homeobox family. Labial subfamily.

The protein localises to the nucleus. In terms of biological role, sequence-specific transcription factor which is part of a developmental regulatory system that provides cells with specific positional identities on the anterior-posterior axis. The protein is Homeobox protein Hox-B1b (hoxb1b) of Takifugu rubripes (Japanese pufferfish).